Consider the following 142-residue polypeptide: MGIHEHVEGIKAHWAKNFSFLDYFKKVYGRDKPLPKWTDADVDEFIASDPVYGPQLKAMRESRKFALGGALVGGAHLGGIALKYSKAPHGVVLATGFGAICGAVVGSEVAEHWYQLYKTDKQGANLRFIYWWEDKVAGNQKS.

Component of complex II composed of eight subunits in plants: four classical SDH subunits SDH1, SDH2, SDH3 and SDH4 (a flavoprotein (FP), an iron-sulfur protein (IP), and a cytochrome b composed of a large and a small subunit.), as well as four subunits unknown in mitochondria from bacteria and heterotrophic eukaryotes.

Its subcellular location is the mitochondrion inner membrane. It functions in the pathway carbohydrate metabolism; tricarboxylic acid cycle. This chain is Succinate dehydrogenase subunit 6, mitochondrial, found in Oryza sativa subsp. japonica (Rice).